The following is a 729-amino-acid chain: Fatty acid oxidation complex subunit alpha (729 aa).

Residues 1-189 (MLYKGDTLYL…KIGLVDGVVK (189 aa)) form an enoyl-CoA hydratase/isomerase region. Asp-296 provides a ligand contact to substrate. The tract at residues 311 to 729 (ETPKQAAVLG…ARPVGDLKTA (419 aa)) is 3-hydroxyacyl-CoA dehydrogenase. NAD(+) is bound by residues Met-324, Asp-343, 400–402 (VVE), Lys-407, and Ser-429. The active-site For 3-hydroxyacyl-CoA dehydrogenase activity is His-450. Position 453 (Asn-453) interacts with NAD(+). 2 residues coordinate substrate: Asn-500 and Tyr-660. The segment at 708–729 (RHNEPYYPPVEPARPVGDLKTA) is disordered.

In the N-terminal section; belongs to the enoyl-CoA hydratase/isomerase family. It in the C-terminal section; belongs to the 3-hydroxyacyl-CoA dehydrogenase family. Heterotetramer of two alpha chains (FadB) and two beta chains (FadA).

It catalyses the reaction a (3S)-3-hydroxyacyl-CoA + NAD(+) = a 3-oxoacyl-CoA + NADH + H(+). The catalysed reaction is a (3S)-3-hydroxyacyl-CoA = a (2E)-enoyl-CoA + H2O. The enzyme catalyses a 4-saturated-(3S)-3-hydroxyacyl-CoA = a (3E)-enoyl-CoA + H2O. It carries out the reaction (3S)-3-hydroxybutanoyl-CoA = (3R)-3-hydroxybutanoyl-CoA. It catalyses the reaction a (3Z)-enoyl-CoA = a 4-saturated (2E)-enoyl-CoA. The catalysed reaction is a (3E)-enoyl-CoA = a 4-saturated (2E)-enoyl-CoA. Its pathway is lipid metabolism; fatty acid beta-oxidation. Functionally, involved in the aerobic and anaerobic degradation of long-chain fatty acids via beta-oxidation cycle. Catalyzes the formation of 3-oxoacyl-CoA from enoyl-CoA via L-3-hydroxyacyl-CoA. It can also use D-3-hydroxyacyl-CoA and cis-3-enoyl-CoA as substrate. This is Fatty acid oxidation complex subunit alpha from Citrobacter koseri (strain ATCC BAA-895 / CDC 4225-83 / SGSC4696).